The following is a 691-amino-acid chain: DNA ligase (691 aa).

NAD(+) contacts are provided by residues 41–45, 90–91, and Glu130; these read DAEYD and SL. Catalysis depends on Lys132, which acts as the N6-AMP-lysine intermediate. NAD(+)-binding residues include Arg153, Glu190, Lys307, and Lys331. Zn(2+) is bound by residues Cys425, Cys428, Cys443, and Cys449. A BRCT domain is found at 610–691; that stretch reads APQGVLAGKT…LHQLLEGNTP (82 aa).

This sequence belongs to the NAD-dependent DNA ligase family. LigA subfamily. Mg(2+) serves as cofactor. Requires Mn(2+) as cofactor.

It carries out the reaction NAD(+) + (deoxyribonucleotide)n-3'-hydroxyl + 5'-phospho-(deoxyribonucleotide)m = (deoxyribonucleotide)n+m + AMP + beta-nicotinamide D-nucleotide.. Its function is as follows. DNA ligase that catalyzes the formation of phosphodiester linkages between 5'-phosphoryl and 3'-hydroxyl groups in double-stranded DNA using NAD as a coenzyme and as the energy source for the reaction. It is essential for DNA replication and repair of damaged DNA. The polypeptide is DNA ligase (Burkholderia cenocepacia (strain ATCC BAA-245 / DSM 16553 / LMG 16656 / NCTC 13227 / J2315 / CF5610) (Burkholderia cepacia (strain J2315))).